A 560-amino-acid chain; its full sequence is uncharacterized protein (560 aa).

An N-terminal signal peptide occupies residues 1–29; that stretch reads MKSALKKSVVSTSISLILASGMAAFAAHA. Ca(2+) is bound by residues D66, D67, and S132. Catalysis depends on S132, which acts as the Nucleophile. S132 is subject to 3-oxoalanine (Ser). Residue H185 is part of the active site. Positions 345 and 346 each coordinate Ca(2+).

It belongs to the sulfatase family. The cofactor is Ca(2+). The conversion to 3-oxoalanine (also known as C-formylglycine, FGly), of a serine or cysteine residue in prokaryotes and of a cysteine residue in eukaryotes, is critical for catalytic activity.

This is an uncharacterized protein from Escherichia coli (strain K12).